Here is a 333-residue protein sequence, read N- to C-terminus: MSTATFTLGIVGARGYTGAALITLLTAHPAIELIFVSSREYHGQPVAAHNPTYRGDLRFETLDPAAVAAKRADVVILALPNGNAAPYVHAIDATAPPTLIIDLSADTRFDPDWYYGLPELTRHTYTGQKRISNPGCYATAMQLAIAPLRDQLAGPPQCFGVSGYSGAGTTPSDKNNQALLRDNLMPYALTDHLHEREVSAQLGIPVEFMPHVAPHFRGITLTANLWLQRPLTREHIKILYATRYANDPLIDIIDPPPWVNQIAARHTVQIGAFTMALGNKRVVVVATLDNLLKGAATQALQNLNRALGLDELTAIPYHPKPPTSPLPSSPLAS.

The active site involves cysteine 136.

It belongs to the NAGSA dehydrogenase family. Type 1 subfamily.

The protein localises to the cytoplasm. It carries out the reaction N-acetyl-L-glutamate 5-semialdehyde + phosphate + NADP(+) = N-acetyl-L-glutamyl 5-phosphate + NADPH + H(+). The protein operates within amino-acid biosynthesis; L-arginine biosynthesis; N(2)-acetyl-L-ornithine from L-glutamate: step 3/4. Functionally, catalyzes the NADPH-dependent reduction of N-acetyl-5-glutamyl phosphate to yield N-acetyl-L-glutamate 5-semialdehyde. The polypeptide is N-acetyl-gamma-glutamyl-phosphate reductase (Xylella fastidiosa (strain 9a5c)).